The chain runs to 255 residues: Probable UDP-N-acetylglucosamine pyrophosphorylase (255 aa).

The enzyme catalyses N-acetyl-alpha-D-glucosamine 1-phosphate + UTP + H(+) = UDP-N-acetyl-alpha-D-glucosamine + diphosphate. The protein operates within nucleotide-sugar biosynthesis; UDP-N-acetyl-alpha-D-glucosamine biosynthesis; UDP-N-acetyl-alpha-D-glucosamine from N-acetyl-alpha-D-glucosamine 1-phosphate: step 1/1. The protein is Probable UDP-N-acetylglucosamine pyrophosphorylase of Acanthamoeba polyphaga (Amoeba).